Consider the following 209-residue polypeptide: UPF0319 protein VF_1616 (209 aa).

Positions 1–21 (MKIQSIFAASFCLLSSISAHA) are cleaved as a signal peptide.

It belongs to the UPF0319 family.

In Aliivibrio fischeri (strain ATCC 700601 / ES114) (Vibrio fischeri), this protein is UPF0319 protein VF_1616.